The sequence spans 234 residues: Cyclo(L-leucyl-L-leucyl) synthase (234 aa).

Serine 28 serves as the catalytic Nucleophile. Substrate is bound by residues tyrosine 171–glutamate 175, tyrosine 195, and glutamate 200–leucine 201.

This sequence belongs to the CDPS family.

It catalyses the reaction 2 L-leucyl-tRNA(Leu) = cyclo(L-leucyl-L-leucyl) + 2 tRNA(Leu) + 2 H(+). It uses activated amino acids in the form of aminoacyl-tRNAs (aa-tRNAs) as substrates to catalyze the ATP-independent formation of cyclodipeptides which are intermediates in diketopiperazine (DKP) biosynthetic pathways. Catalyzes the formation of cyclo(L-Leu-L-Leu) (cLL) from L-leucyl-tRNA(Leu). Can incorporate various nonpolar residues, such as L-phenylalanine, L-leucine and L-methionine, into cyclodipeptides. The chain is Cyclo(L-leucyl-L-leucyl) synthase from Staphylococcus haemolyticus (strain JCSC1435).